Here is a 374-residue protein sequence, read N- to C-terminus: N5-carboxyaminoimidazole ribonucleotide synthase (374 aa).

Residues Arg108, Lys148, Gly153–Gln159, Glu183–Leu186, Glu191, His214, and Asn266–Glu267 each bind ATP. An ATP-grasp domain is found at Lys112 to Thr296.

The protein belongs to the PurK/PurT family. As to quaternary structure, homodimer.

The enzyme catalyses 5-amino-1-(5-phospho-beta-D-ribosyl)imidazole + hydrogencarbonate + ATP = 5-carboxyamino-1-(5-phospho-D-ribosyl)imidazole + ADP + phosphate + 2 H(+). The protein operates within purine metabolism; IMP biosynthesis via de novo pathway; 5-amino-1-(5-phospho-D-ribosyl)imidazole-4-carboxylate from 5-amino-1-(5-phospho-D-ribosyl)imidazole (N5-CAIR route): step 1/2. Catalyzes the ATP-dependent conversion of 5-aminoimidazole ribonucleotide (AIR) and HCO(3)(-) to N5-carboxyaminoimidazole ribonucleotide (N5-CAIR). This Staphylococcus aureus (strain COL) protein is N5-carboxyaminoimidazole ribonucleotide synthase.